The following is a 263-amino-acid chain: MSSYHLSTKERLLAIVDDIEIISKELIENTIAPKHQKMSSADHGQLVELLVSKDKELKATLQLAAEQAGIEKKMDGLREQVKEQDEEINQLQKQLKEAEHILATSIFQGRQKLSSINKAVKRPVSSEELIKFAHRISASNAICAPLTWQQGDLRRPYPTDIEMRLGFLGKSDLNINGHNAPNQNNLNEMQRNAAGAGAGSGVADIPASAQNQFAWHPSGELHMTMGAGAGSVSLDTRSHKDASQDDVEVMSTDSSSSSSSDSQ.

Residues 62-106 are a coiled coil; it reads QLAAEQAGIEKKMDGLREQVKEQDEEINQLQKQLKEAEHILATSI. A disordered region spans residues 221–263; that stretch reads LHMTMGAGAGSVSLDTRSHKDASQDDVEVMSTDSSSSSSSDSQ. The segment covering 251–263 has biased composition (low complexity); sequence STDSSSSSSSDSQ.

This sequence belongs to the Mediator complex subunit 4 family. In terms of assembly, component of the Mediator complex.

It localises to the nucleus. Functionally, component of the Mediator complex, a coactivator involved in the regulated transcription of nearly all RNA polymerase II-dependent genes. Mediator functions as a bridge to convey information from gene-specific regulatory proteins to the basal RNA polymerase II transcription machinery. Mediator is recruited to promoters by direct interactions with regulatory proteins and serves as a scaffold for the assembly of a functional preinitiation complex with RNA polymerase II and the general transcription factors. In Aedes aegypti (Yellowfever mosquito), this protein is Mediator of RNA polymerase II transcription subunit 4 (MED4).